A 113-amino-acid chain; its full sequence is Nucleoid-associated protein Synpcc7942_0464 (113 aa).

It belongs to the YbaB/EbfC family. Homodimer.

The protein resides in the cytoplasm. Its subcellular location is the nucleoid. In terms of biological role, binds to DNA and alters its conformation. May be involved in regulation of gene expression, nucleoid organization and DNA protection. The chain is Nucleoid-associated protein Synpcc7942_0464 from Synechococcus elongatus (strain ATCC 33912 / PCC 7942 / FACHB-805) (Anacystis nidulans R2).